The following is a 127-amino-acid chain: Anti-adapter protein IraD (127 aa).

This sequence belongs to the GpW/Gp25 family. IraD subfamily. As to quaternary structure, interacts with RssB.

The protein resides in the cytoplasm. Inhibits RpoS proteolysis by regulating RssB activity, thereby increasing the stability of the sigma stress factor RpoS during oxidative stress. Its effect on RpoS stability is due to its interaction with RssB, which probably blocks the interaction of RssB with RpoS, and the consequent delivery of the RssB-RpoS complex to the ClpXP protein degradation pathway. The protein is Anti-adapter protein IraD of Escherichia coli O6:H1 (strain CFT073 / ATCC 700928 / UPEC).